Reading from the N-terminus, the 351-residue chain is Probable RNA methyltransferase BAV1540 (351 aa).

Glu-90 (proton acceptor) is an active-site residue. A Radical SAM core domain is found at 93-319 (LLPRDGLCVS…VKVRNSAGQD (227 aa)). A disulfide bond links Cys-100 and Cys-324. Positions 107, 111, and 114 each coordinate [4Fe-4S] cluster. Residues 152-153 (GE), Ser-182, 205-207 (SLH), and Asn-281 each bind S-adenosyl-L-methionine. Catalysis depends on Cys-324, which acts as the S-methylcysteine intermediate.

Belongs to the radical SAM superfamily. RlmN family. The cofactor is [4Fe-4S] cluster.

Its subcellular location is the cytoplasm. The chain is Probable RNA methyltransferase BAV1540 from Bordetella avium (strain 197N).